A 625-amino-acid polypeptide reads, in one-letter code: MNFQENYDVVVIGGGHAGVEASLAAARMGSKTLLMTINLNMVAFMPCNPSIGGSAKGIVVREIDALGGEMGRNIDKTYIQMKMLNTGKGPAVRALRAQADKDEYADSMKNTVSDQENLTLRQGMVEELILDEEKKKVIGIKTSTGTKYGAKAVIITTGTALRGEIIIGELKYSSGPNNSLSSIGLADNLREIGFEIGRFKTGTPPRVLASSIDYDKTEIQPGDEAPNHFSFMSSDENYLKDQIPCWLTYTTENSHTILRGNLHRAPLFSGIVKGVGPRYCPSIEDKITRFADKPRHQLFLEPEGRNTEEVYIGGLSTSMPEDVQFDLVKSIPGLENAQMMRPGYAIEYDVVMPHQLRPTLETKLVSGLFTAGQTNGTSGYEEAAGQGLVAGINAALKVQGKSEFILKRSEAYIGVMIDDLVTKGTLEPYRLLTSRAEYRLILRHDNADRRLTEIGRQVGLVSDEQWEHYQAKMAQFDREMKRLNSEKLKPLPDTQEKLGKLGFGPIKDALTGAEFLKRPEVHYNEVIDFIGQAPEKIDRTVIELIETEITYEGYIKKAMDQVDKMHRLEAKRIPKNMDWDKLDSIATEARQKFKKINPETLGQASRISGVNPADISILMVYLEGK.

Residues 13-18 (GGGHAG), Val125, and Ser182 each bind FAD. 276 to 290 (GPRYCPSIEDKITRF) contacts NAD(+). Gln373 lines the FAD pocket.

The protein belongs to the MnmG family. As to quaternary structure, homodimer. Heterotetramer of two MnmE and two MnmG subunits. FAD is required as a cofactor.

It localises to the cytoplasm. Its function is as follows. NAD-binding protein involved in the addition of a carboxymethylaminomethyl (cmnm) group at the wobble position (U34) of certain tRNAs, forming tRNA-cmnm(5)s(2)U34. In Lactococcus lactis subsp. lactis (strain IL1403) (Streptococcus lactis), this protein is tRNA uridine 5-carboxymethylaminomethyl modification enzyme MnmG.